Reading from the N-terminus, the 99-residue chain is Large ribosomal subunit protein uL23 (99 aa).

The protein belongs to the universal ribosomal protein uL23 family. In terms of assembly, part of the 50S ribosomal subunit. Contacts protein L29, and trigger factor when it is bound to the ribosome.

In terms of biological role, one of the early assembly proteins it binds 23S rRNA. One of the proteins that surrounds the polypeptide exit tunnel on the outside of the ribosome. Forms the main docking site for trigger factor binding to the ribosome. This chain is Large ribosomal subunit protein uL23, found in Hydrogenobaculum sp. (strain Y04AAS1).